A 329-amino-acid polypeptide reads, in one-letter code: Prostaglandin reductase 1 (329 aa).

Phosphothreonine is present on Thr18. Residues 152–155 (GAVG), Lys178, Tyr193, Asn217, 239–245 (CGAISQY), 270–272 (FIV), and Asn321 contribute to the NADP(+) site. Lys178 carries the post-translational modification N6-(2-hydroxyisobutyryl)lysine; alternate. Position 178 is an N6-acetyllysine; alternate (Lys178).

It belongs to the NADP-dependent oxidoreductase L4BD family. In terms of assembly, monomer or homodimer.

Its subcellular location is the cytoplasm. The enzyme catalyses 13,14-dihydro-15-oxo-prostaglandin E1 + NADP(+) = 15-oxoprostaglandin E1 + NADPH + H(+). The catalysed reaction is 13,14-dihydro-15-oxo-prostaglandin E2 + NADP(+) = 15-oxoprostaglandin E2 + NADPH + H(+). It catalyses the reaction 13,14-dihydro-15-oxo-prostaglandin F1alpha + NADP(+) = 15-oxoprostaglandin F1alpha + NADPH + H(+). It carries out the reaction 13,14-dihydro-15-oxo-PGF2alpha + NADP(+) = 15-oxoprostaglandin F2alpha + NADPH + H(+). The enzyme catalyses leukotriene B4 + NADP(+) = 12-oxo-leukotriene B4 + NADPH + H(+). The catalysed reaction is 20-hydroxy-leukotriene B4 + NADP(+) = 12-oxo-20-hydroxy-leukotriene B4 + NADPH + H(+). It catalyses the reaction 6-trans-leukotriene B4 + NADP(+) = 12-oxo-(5S)-hydroxy-(6E,8E,10E,14Z)-eicosatetraenoate + NADPH + H(+). It carries out the reaction (5S,12S)-dihydroxy-(6E,10E,12E,14Z)-eicosatetraenoate + NADP(+) = 12-oxo-(5S)-hydroxy-(6E,8E,10E,14Z)-eicosatetraenoate + NADPH + H(+). The enzyme catalyses an n-alkanal + NADP(+) = an alk-2-enal + NADPH + H(+). The catalysed reaction is hexanal + NADP(+) = (E)-hex-2-enal + NADPH + H(+). It catalyses the reaction octanal + NADP(+) = (2E)-octenal + NADPH + H(+). It carries out the reaction decanal + NADP(+) = (2E)-decenal + NADPH + H(+). The enzyme catalyses dodecanal + NADP(+) = (2E)-dodecenal + NADPH + H(+). The catalysed reaction is 4-hydroxynonanal + NADP(+) = (E)-4-hydroxynon-2-enal + NADPH + H(+). It catalyses the reaction pentan-2-one + NADP(+) = (E)-pent-3-en-2-one + NADPH + H(+). It carries out the reaction nonan-2-one + NADP(+) = (3E)-nonen-2-one + NADPH + H(+). NAD(P)H-dependent oxidoreductase involved in metabolic inactivation of pro- and anti-inflammatory eicosanoids: prostaglandins (PG), leukotrienes (LT) and lipoxins (LX). Catalyzes with high efficiency the reduction of the 13,14 double bond of 15-oxoPGs, including 15-oxo-PGE1, 15-oxo-PGE2, 15-oxo-PGF1-alpha and 15-oxo-PGF2-alpha. Catalyzes with lower efficiency the oxidation of the hydroxyl group at C12 of LTB4 and its derivatives, converting them into biologically less active 12-oxo-LTB4 metabolites. Reduces 15-oxo-LXA4 to 13,14 dihydro-15-oxo-LXA4, enhancing neutrophil recruitment at the inflammatory site. Plays a role in metabolic detoxification of alkenals and ketones. Reduces alpha,beta-unsaturated alkenals and ketones, particularly those with medium-chain length, showing highest affinity toward (2E)-decenal and (3E)-3-nonen-2-one. May inactivate 4-hydroxy-2-nonenal, a cytotoxic lipid constituent of oxidized low-density lipoprotein particles. The chain is Prostaglandin reductase 1 (Ptgr1) from Mus musculus (Mouse).